Here is a 152-residue protein sequence, read N- to C-terminus: Transcriptional regulator MraZ (152 aa).

SpoVT-AbrB domains are found at residues 5-52 (ATLV…PLPE) and 81-124 (ASEC…DETT).

The protein belongs to the MraZ family. In terms of assembly, dodecamer.

It localises to the cytoplasm. It is found in the nucleoid. In terms of biological role, negatively regulates its own expression and that of the subsequent genes in the proximal part of the division and cell wall (dcw) gene cluster. Acts by binding directly to DNA. May also regulate the expression of genes outside the dcw cluster. The sequence is that of Transcriptional regulator MraZ from Escherichia coli (strain K12).